The primary structure comprises 206 residues: ATP phosphoribosyltransferase (206 aa).

This sequence belongs to the ATP phosphoribosyltransferase family. Short subfamily. In terms of assembly, heteromultimer composed of HisG and HisZ subunits.

Its subcellular location is the cytoplasm. It carries out the reaction 1-(5-phospho-beta-D-ribosyl)-ATP + diphosphate = 5-phospho-alpha-D-ribose 1-diphosphate + ATP. It functions in the pathway amino-acid biosynthesis; L-histidine biosynthesis; L-histidine from 5-phospho-alpha-D-ribose 1-diphosphate: step 1/9. Its function is as follows. Catalyzes the condensation of ATP and 5-phosphoribose 1-diphosphate to form N'-(5'-phosphoribosyl)-ATP (PR-ATP). Has a crucial role in the pathway because the rate of histidine biosynthesis seems to be controlled primarily by regulation of HisG enzymatic activity. This is ATP phosphoribosyltransferase from Geobacillus sp. (strain WCH70).